We begin with the raw amino-acid sequence, 301 residues long: Rhodopsin (301 aa).

Residues 1 to 18 (LHMIHLHWYQYPPMNPMM) are Extracellular-facing. Residues 19 to 43 (YPLLLIFMLFTGILCLAGNFVTIWV) traverse the membrane as a helical segment. The Cytoplasmic portion of the chain corresponds to 44–55 (FMNTKSLRTPAN). A helical membrane pass occupies residues 56–78 (LLVVNLAMSDFLMMFTMFPPMMV). The Extracellular portion of the chain corresponds to 79-92 (TCYYHTWTLGPTFC). Cysteines 92 and 169 form a disulfide. The helical transmembrane segment at 93–115 (QVYGFLGNLCGCASIWTMVFITF) threads the bilayer. The 'Ionic lock' involved in activated form stabilization signature appears at 116-118 (DRY). Residues 116-134 (DRYNVIVKGVAGEPLSTKK) are Cytoplasmic-facing. Residues 135–155 (ASLWILIVWVLSLAWCMAPFF) form a helical membrane-spanning segment. Residues 156–182 (GWNRYVPEGNLTGCGTDYLSEDILSRS) lie on the Extracellular side of the membrane. Asn-165 is a glycosylation site (N-linked (GlcNAc...) asparagine). The helical transmembrane segment at 183 to 204 (YLYIYSTWVYFLPLTITIYCYV) threads the bilayer. Residues 205-245 (FIIKAVAAHEKGMRDQAKKMGIKSLRNEEAQKTSAECRLAK) are Cytoplasmic-facing. A helical membrane pass occupies residues 246 to 267 (IAMTTVALWFIAWTPYLLINWV). Residues 268–278 (GMFARSYLSPV) are Extracellular-facing. A helical membrane pass occupies residues 279 to 300 (YTIWGYVFAKANAVYNPIVYAI). The residue at position 288 (Lys-288) is an N6-(retinylidene)lysine.

The protein belongs to the G-protein coupled receptor 1 family. Opsin subfamily. Homodimer. Interacts with GNAQ. In terms of processing, contains one covalently linked retinal chromophore.

It is found in the cell projection. It localises to the rhabdomere membrane. Its function is as follows. Photoreceptor required for image-forming vision at low light intensity. Can use both retinal and 3-dehydroretinal as visual pigment. Light-induced isomerization of 11-cis to all-trans retinal triggers a conformational change that activates signaling via G-proteins. Signaling via GNAQ probably mediates the activation of phospholipase C. The polypeptide is Rhodopsin (RHO) (Procambarus milleri (Miami cave crayfish)).